A 124-amino-acid chain; its full sequence is Small ribosomal subunit protein bS6 (124 aa).

The segment at 97-124 is disordered; sequence TGPSPMMKEVQREEAKKAAAAQPTEAQA. Low complexity predominate over residues 114–124; it reads AAAAQPTEAQA.

This sequence belongs to the bacterial ribosomal protein bS6 family.

In terms of biological role, binds together with bS18 to 16S ribosomal RNA. This chain is Small ribosomal subunit protein bS6, found in Paraburkholderia phymatum (strain DSM 17167 / CIP 108236 / LMG 21445 / STM815) (Burkholderia phymatum).